The sequence spans 134 residues: Arsenate reductase 2 (134 aa).

Catalysis depends on nucleophile residues C11, C83, and C90. Disulfide bonds link C11-C83 and C83-C90.

The protein belongs to the low molecular weight phosphotyrosine protein phosphatase family. Thioredoxin-coupled ArsC subfamily.

It localises to the cytoplasm. The catalysed reaction is arsenate + [thioredoxin]-dithiol + H(+) = arsenite + [thioredoxin]-disulfide + H2O. In terms of biological role, catalyzes the reduction of arsenate [As(V)] to arsenite [As(III)]. The sequence is that of Arsenate reductase 2 from Bacillus cereus (strain ATCC 10987 / NRS 248).